Reading from the N-terminus, the 396-residue chain is Dimethyladenosine transferase 2, mitochondrial (396 aa).

A mitochondrion-targeting transit peptide spans Met-1–Phe-43. Positions Phe-43–Thr-71 are disordered. S-adenosyl-L-methionine-binding residues include Ile-74, Glu-123, and Asp-149. The interval Lys-328–Arg-329 is DNA-binding.

This sequence belongs to the class I-like SAM-binding methyltransferase superfamily. rRNA adenine N(6)-methyltransferase family. KsgA subfamily. Homodimer. Component of the mitochondrial transcription initiation complex, composed at least of TFB2M, TFAM and POLRMT. In this complex TFAM recruits POLRMT to the promoter whereas TFB2M induces structural changes in POLRMT to enable promoter opening and trapping of the DNA non-template strand. Interacts with mitochondrial RNA polymerase POLRMT. Interacts with TFAM. In terms of tissue distribution, ubiquitously expressed.

It is found in the mitochondrion. It carries out the reaction adenosine in rRNA + S-adenosyl-L-methionine = N(6)-methyladenosine in rRNA + S-adenosyl-L-homocysteine + H(+). S-adenosyl-L-methionine-dependent rRNA methyltransferase which may methylate two specific adjacent adenosines in the loop of a conserved hairpin near the 3'-end of 12S mitochondrial rRNA. Component of the mitochondrial transcription initiation complex, composed at least of TFB2M, TFAM and POLRMT that is required for basal transcription of mitochondrial DNA. In this complex, TFAM recruits POLRMT to a specific promoter whereas TFB2M induces structural changes in POLRMT to enable promoter opening and trapping of the DNA non-template strand. Stimulates transcription independently of the methyltransferase activity. This chain is Dimethyladenosine transferase 2, mitochondrial, found in Mus musculus (Mouse).